The sequence spans 71 residues: Small ribosomal subunit protein bS21 (71 aa).

It belongs to the bacterial ribosomal protein bS21 family.

In Psychromonas ingrahamii (strain DSM 17664 / CCUG 51855 / 37), this protein is Small ribosomal subunit protein bS21.